We begin with the raw amino-acid sequence, 508 residues long: Light-independent protochlorophyllide reductase subunit B (508 aa).

Asp36 serves as a coordination point for [4Fe-4S] cluster. Residue Asp294 is the Proton donor of the active site. Substrate is bound at residue 429–430; it reads GM.

This sequence belongs to the ChlB/BchB/BchZ family. In terms of assembly, protochlorophyllide reductase is composed of three subunits; ChlL, ChlN and ChlB. Forms a heterotetramer of two ChlB and two ChlN subunits. It depends on [4Fe-4S] cluster as a cofactor.

It catalyses the reaction chlorophyllide a + oxidized 2[4Fe-4S]-[ferredoxin] + 2 ADP + 2 phosphate = protochlorophyllide a + reduced 2[4Fe-4S]-[ferredoxin] + 2 ATP + 2 H2O. It participates in porphyrin-containing compound metabolism; chlorophyll biosynthesis (light-independent). Functionally, component of the dark-operative protochlorophyllide reductase (DPOR) that uses Mg-ATP and reduced ferredoxin to reduce ring D of protochlorophyllide (Pchlide) to form chlorophyllide a (Chlide). This reaction is light-independent. The NB-protein (ChlN-ChlB) is the catalytic component of the complex. In Gloeothece citriformis (strain PCC 7424) (Cyanothece sp. (strain PCC 7424)), this protein is Light-independent protochlorophyllide reductase subunit B.